A 66-amino-acid polypeptide reads, in one-letter code: Omega conotoxin-CVIE (66 aa).

A signal peptide spans 1–17 (VVIVAVLLLTACQLITA). A propeptide spanning residues 18 to 40 (NDSRGTQKHRALRSDTKLSMSTR) is cleaved from the precursor. 3 disulfide bridges follow: cysteine 41–cysteine 56, cysteine 48–cysteine 60, and cysteine 55–cysteine 65. Cysteine 65 is subject to Cysteine amide.

The protein belongs to the conotoxin O1 superfamily. As to expression, expressed by the venom duct.

The protein localises to the secreted. Omega-conotoxins act at presynaptic membranes, they bind and block voltage-gated calcium channels. This toxin blocks N-type calcium channels (Cav2.2/CACNA1B). It shows a higher potency when Cav2.2/CACNA1B is only expressed with the ancillary subunit CACNB3 (IC(50)=0.12 nM) than on Cav2.2/CACNA1B expressed with the ancillary subunits CACNA2D1 and CACNB3 (IC(50)=2.6 nM). The Cav2.2/CACNA1B block by this toxin is voltage-independent, whereas the recovery from toxin block is voltage-dependent. There is a low recovery at physiological membrane potential and a high recovery with hyperpolarized potential. This indicates that the toxin has a higher affinity for Cav2.2/CACNA1B in the inactivated state. It is noteworthy that ancillary subunits beta modulate recovery from this toxin block. Cav2.2/CACNA1B expressed with the ancillary subunit CACNB2a (isoform 2a) almost recover completely from this toxin block, whereas Cav2.2/CACNA1B expressed with CACNB3 exhibits relatively weak recovery. Inhibition by this toxin of excitatory synaptic transmission is reversible. In vivo, when tested on rat model of persistent pain, this toxin blocks chronic pain behavior. The protein is Omega conotoxin-CVIE of Conus catus (Cat cone).